The following is a 325-amino-acid chain: Quinone oxidoreductase (325 aa).

The protein belongs to the zinc-containing alcohol dehydrogenase family. Quinone oxidoreductase subfamily.

It catalyses the reaction 2 a quinone + NADPH + H(+) = 2 a 1,4-benzosemiquinone + NADP(+). The sequence is that of Quinone oxidoreductase (qor) from Pseudomonas aeruginosa (strain ATCC 15692 / DSM 22644 / CIP 104116 / JCM 14847 / LMG 12228 / 1C / PRS 101 / PAO1).